Here is a 148-residue protein sequence, read N- to C-terminus: Ubiquitin-conjugating enzyme E2 5B (148 aa).

In terms of domain architecture, UBC core spans 1 to 147 (MASKRILKEL…ARSWTQKYAM (147 aa)). The Glycyl thioester intermediate role is filled by Cys85.

It belongs to the ubiquitin-conjugating enzyme family.

It carries out the reaction S-ubiquitinyl-[E1 ubiquitin-activating enzyme]-L-cysteine + [E2 ubiquitin-conjugating enzyme]-L-cysteine = [E1 ubiquitin-activating enzyme]-L-cysteine + S-ubiquitinyl-[E2 ubiquitin-conjugating enzyme]-L-cysteine.. It functions in the pathway protein modification; protein ubiquitination. E2 conjugating enzyme that associates with the E3 ubiquitin-protein ligase EL5 to mediate ubiquitination of target proteins. This Oryza sativa subsp. japonica (Rice) protein is Ubiquitin-conjugating enzyme E2 5B (UBC5B).